A 338-amino-acid chain; its full sequence is L-asparaginase 1 (338 aa).

Residues 4-329 (KSIYVAYTGG…ETIRKAMSQN (326 aa)) enclose the Asparaginase/glutaminase domain. Thr14 acts as the O-isoaspartyl threonine intermediate in catalysis. Substrate is bound by residues 59-61 (DSS) and 91-92 (TD).

Belongs to the asparaginase 1 family. As to quaternary structure, homotetramer.

It is found in the cytoplasm. It catalyses the reaction L-asparagine + H2O = L-aspartate + NH4(+). This chain is L-asparaginase 1 (ansA), found in Escherichia coli O157:H7.